A 222-amino-acid polypeptide reads, in one-letter code: RRVFTLTFLFLAAEAFHLSDRIETRESETGKGLATCKKDSICAYLQQNARGVTPAHMCECPGEQTCPLSWDPDDGKTLTRGDEQYKFCSSPPQALHECKEKELVFTSKFEYEANSNPRKFLSYAGYIHCACPIGFSYHLTRRTNSTTEGQDLETVYFSCEEYKTCGTNDTCHIISESSEAFMIYKMCNCDEDLKCPTDPEAAFRTDHIEQVLDYNLYNMQCQ.

It belongs to the scoloptoxin-11 family. In terms of processing, contains 8 disulfide bonds. Expressed by the venom gland.

The protein resides in the secreted. This is U-scoloptoxin(11)-Sm5a from Scolopendra morsitans (Tanzanian blue ringleg centipede).